A 1188-amino-acid polypeptide reads, in one-letter code: DNA-directed RNA polymerase subunit beta (1188 aa).

This sequence belongs to the RNA polymerase beta chain family. In terms of assembly, the RNAP catalytic core consists of 2 alpha, 1 beta, 1 beta' and 1 omega subunit. When a sigma factor is associated with the core the holoenzyme is formed, which can initiate transcription.

The enzyme catalyses RNA(n) + a ribonucleoside 5'-triphosphate = RNA(n+1) + diphosphate. DNA-dependent RNA polymerase catalyzes the transcription of DNA into RNA using the four ribonucleoside triphosphates as substrates. The protein is DNA-directed RNA polymerase subunit beta of Streptococcus pyogenes serotype M3 (strain ATCC BAA-595 / MGAS315).